The primary structure comprises 349 residues: Palmitoyltransferase PFA5 (349 aa).

2 helical membrane-spanning segments follow: residues 19–39 and 57–77; these read LIPF…CHQF and LIIV…LMLV. One can recognise a DHHC domain in the interval 126-176; sequence IWCSNCQSLKMSRTHHSTKVGYCVPRFDHYCVWIGTVLGRLNYKLFVQFTF. Catalysis depends on Cys-156, which acts as the S-palmitoyl cysteine intermediate. Transmembrane regions (helical) follow at residues 170–190 and 204–224; these read LFVQ…ISIA and VYAV…LFLT.

It belongs to the DHHC palmitoyltransferase family. PFA5 subfamily.

The protein resides in the membrane. The catalysed reaction is L-cysteinyl-[protein] + hexadecanoyl-CoA = S-hexadecanoyl-L-cysteinyl-[protein] + CoA. The polypeptide is Palmitoyltransferase PFA5 (PFA5) (Kluyveromyces lactis (strain ATCC 8585 / CBS 2359 / DSM 70799 / NBRC 1267 / NRRL Y-1140 / WM37) (Yeast)).